The chain runs to 351 residues: Ribonucleoside-diphosphate reductase subunit beta (351 aa).

The Fe cation site is built by Asp94, Glu124, and His127. Residue Tyr131 is part of the active site. The Fe cation site is built by Glu191, Glu225, and His228.

It belongs to the ribonucleoside diphosphate reductase small chain family. As to quaternary structure, tetramer of two alpha and two beta subunits. Fe cation serves as cofactor.

It carries out the reaction a 2'-deoxyribonucleoside 5'-diphosphate + [thioredoxin]-disulfide + H2O = a ribonucleoside 5'-diphosphate + [thioredoxin]-dithiol. In terms of biological role, provides the precursors necessary for DNA synthesis. Catalyzes the biosynthesis of deoxyribonucleotides from the corresponding ribonucleotides. The chain is Ribonucleoside-diphosphate reductase subunit beta (nrdB) from Treponema pallidum (strain Nichols).